Here is a 615-residue protein sequence, read N- to C-terminus: Matrix metalloproteinase-25 (615 aa).

The propeptide occupies 1–162; that stretch reads MCFPGSQISP…AAGLVRRRRR (162 aa). A helical transmembrane segment spans residues 53-73; sequence ILRLPAFGLPLLALLLVPLLP. Positions 143–150 match the Cysteine switch motif; sequence PRCSLPDV. Zn(2+) is bound by residues Cys145 and His287. Glu288 is an active-site residue. His291 and His297 together coordinate Zn(2+). Positions 336-366 are disordered; sequence VSQNPNARPTRKPLVPPPQPPAMPPDSPATP. Residues 349 to 366 are compositionally biased toward pro residues; it reads LVPPPQPPAMPPDSPATP. 4 Hemopexin repeats span residues 368 to 417, 421 to 466, 467 to 515, and 516 to 562; these read PDRC…WEGL, VKVI…GLPP, GEDV…DGAP, and FAPD…WLDC. Cys371 and Cys562 form a disulfide bridge. The disordered stretch occupies residues 547–582; sequence AESDSPQPIGPKWLDCPAPNSDPRVTSPPKTTSKTR. Residue Ala593 is the site of GPI-anchor amidated alanine attachment. Residues 594–615 constitute a propeptide, removed in mature form; that stretch reads SEQLSPLLLPLLPLVAGEVFSY.

It belongs to the peptidase M10A family. It depends on Zn(2+) as a cofactor. The cofactor is Ca(2+). The precursor is cleaved by a furin endopeptidase.

The protein localises to the cell membrane. Its function is as follows. May activate progelatinase A. This Mus musculus (Mouse) protein is Matrix metalloproteinase-25 (Mmp25).